The following is a 261-amino-acid chain: Cytochrome c oxidase subunit 3 (261 aa).

Residues 1–15 (MTHQTHAYHMVNPSP) lie on the Mitochondrial matrix side of the membrane. Residues 16–34 (WPLTGALSALLMTSGLIMW) traverse the membrane as a helical segment. The Mitochondrial intermembrane segment spans residues 35–40 (FHYNSM). Residues 41-66 (ALLTLGFTTNLLTMYQWWRDVIREGT) traverse the membrane as a helical segment. Topologically, residues 67–72 (FQGHHT) are mitochondrial matrix. A helical transmembrane segment spans residues 73–105 (PIVQKGLRYGMVLFIVSEVFFFAGFFWAFYHSS). At 106–128 (LAPTPELGGCWPPTGIIPLNPLE) the chain is on the mitochondrial intermembrane side. The chain crosses the membrane as a helical span at residues 129–152 (VPLLNTSVLLASGVSITWAHHSLM). Over 153–155 (EGN) the chain is Mitochondrial matrix. A helical transmembrane segment spans residues 156 to 183 (RKHMLQALFITISLGVYFTLLQASEYYE). Residues 184 to 190 (TSFTISD) lie on the Mitochondrial intermembrane side of the membrane. The chain crosses the membrane as a helical span at residues 191 to 223 (GVYGSTFFMATGFHGLHVIIGSTFLIVCFLRQL). The Mitochondrial matrix segment spans residues 224 to 232 (YYHFTSNHH). The helical transmembrane segment at 233 to 256 (FGFEAAAWYWHFVDVVWLFLYVSI) threads the bilayer. Residues 257-261 (YWWGS) lie on the Mitochondrial intermembrane side of the membrane.

The protein belongs to the cytochrome c oxidase subunit 3 family. In terms of assembly, component of the cytochrome c oxidase (complex IV, CIV), a multisubunit enzyme composed of 14 subunits. The complex is composed of a catalytic core of 3 subunits MT-CO1, MT-CO2 and MT-CO3, encoded in the mitochondrial DNA, and 11 supernumerary subunits COX4I, COX5A, COX5B, COX6A, COX6B, COX6C, COX7A, COX7B, COX7C, COX8 and NDUFA4, which are encoded in the nuclear genome. The complex exists as a monomer or a dimer and forms supercomplexes (SCs) in the inner mitochondrial membrane with NADH-ubiquinone oxidoreductase (complex I, CI) and ubiquinol-cytochrome c oxidoreductase (cytochrome b-c1 complex, complex III, CIII), resulting in different assemblies (supercomplex SCI(1)III(2)IV(1) and megacomplex MCI(2)III(2)IV(2)).

Its subcellular location is the mitochondrion inner membrane. The catalysed reaction is 4 Fe(II)-[cytochrome c] + O2 + 8 H(+)(in) = 4 Fe(III)-[cytochrome c] + 2 H2O + 4 H(+)(out). Its function is as follows. Component of the cytochrome c oxidase, the last enzyme in the mitochondrial electron transport chain which drives oxidative phosphorylation. The respiratory chain contains 3 multisubunit complexes succinate dehydrogenase (complex II, CII), ubiquinol-cytochrome c oxidoreductase (cytochrome b-c1 complex, complex III, CIII) and cytochrome c oxidase (complex IV, CIV), that cooperate to transfer electrons derived from NADH and succinate to molecular oxygen, creating an electrochemical gradient over the inner membrane that drives transmembrane transport and the ATP synthase. Cytochrome c oxidase is the component of the respiratory chain that catalyzes the reduction of oxygen to water. Electrons originating from reduced cytochrome c in the intermembrane space (IMS) are transferred via the dinuclear copper A center (CU(A)) of subunit 2 and heme A of subunit 1 to the active site in subunit 1, a binuclear center (BNC) formed by heme A3 and copper B (CU(B)). The BNC reduces molecular oxygen to 2 water molecules using 4 electrons from cytochrome c in the IMS and 4 protons from the mitochondrial matrix. The sequence is that of Cytochrome c oxidase subunit 3 (MT-CO3) from Canis lupus familiaris (Dog).